The chain runs to 190 residues: Probable thymidylate kinase (190 aa).

9–16 (GIDGAGKT) contacts ATP.

It belongs to the thymidylate kinase family.

It carries out the reaction dTMP + ATP = dTDP + ADP. The sequence is that of Probable thymidylate kinase (tmk1) from Sulfurisphaera tokodaii (strain DSM 16993 / JCM 10545 / NBRC 100140 / 7) (Sulfolobus tokodaii).